The following is a 116-amino-acid chain: Large ribosomal subunit protein bL19 (116 aa).

The protein belongs to the bacterial ribosomal protein bL19 family.

Its function is as follows. This protein is located at the 30S-50S ribosomal subunit interface and may play a role in the structure and function of the aminoacyl-tRNA binding site. The chain is Large ribosomal subunit protein bL19 from Azotobacter vinelandii (strain DJ / ATCC BAA-1303).